Consider the following 484-residue polypeptide: Protein nucleotidyltransferase YdiU (484 aa).

Residues Gly81, Gly83, Arg84, Lys103, Asp115, Gly116, Arg166, and Arg173 each coordinate ATP. Residue Asp244 is the Proton acceptor of the active site. Asn245 and Asp254 together coordinate Mg(2+). ATP is bound at residue Asp254.

The protein belongs to the SELO family. Mg(2+) is required as a cofactor. Mn(2+) serves as cofactor.

The catalysed reaction is L-seryl-[protein] + ATP = 3-O-(5'-adenylyl)-L-seryl-[protein] + diphosphate. It carries out the reaction L-threonyl-[protein] + ATP = 3-O-(5'-adenylyl)-L-threonyl-[protein] + diphosphate. The enzyme catalyses L-tyrosyl-[protein] + ATP = O-(5'-adenylyl)-L-tyrosyl-[protein] + diphosphate. It catalyses the reaction L-histidyl-[protein] + UTP = N(tele)-(5'-uridylyl)-L-histidyl-[protein] + diphosphate. The catalysed reaction is L-seryl-[protein] + UTP = O-(5'-uridylyl)-L-seryl-[protein] + diphosphate. It carries out the reaction L-tyrosyl-[protein] + UTP = O-(5'-uridylyl)-L-tyrosyl-[protein] + diphosphate. Its function is as follows. Nucleotidyltransferase involved in the post-translational modification of proteins. It can catalyze the addition of adenosine monophosphate (AMP) or uridine monophosphate (UMP) to a protein, resulting in modifications known as AMPylation and UMPylation. The sequence is that of Protein nucleotidyltransferase YdiU from Shewanella sp. (strain MR-7).